An 88-amino-acid polypeptide reads, in one-letter code: UPF0250 protein Shewmr4_0986 (88 aa).

This sequence belongs to the UPF0250 family.

This Shewanella sp. (strain MR-4) protein is UPF0250 protein Shewmr4_0986.